The sequence spans 600 residues: Sodium- and chloride-dependent betaine transporter (600 aa).

The disordered stretch occupies residues 1 to 31 (MGTSEHVPLPTDEAKAKELEQSQHSEEPDRG). Residues 1–38 (MGTSEHVPLPTDEAKAKELEQSQHSEEPDRGQWTGKFD) lie on the Cytoplasmic side of the membrane. Residues 12–30 (DEAKAKELEQSQHSEEPDR) show a composition bias toward basic and acidic residues. 3 consecutive transmembrane segments (helical) span residues 39-59 (FLMS…FPYL), 68-88 (FLVV…LMEV), and 116-136 (VVIA…AMFY). Residues 137 to 207 (MISSIAWVFP…DTGDISEFGG (71 aa)) lie on the Extracellular side of the membrane. An N-linked (GlcNAc...) asparagine glycan is attached at asparagine 165. The next 2 helical transmembrane spans lie at 208-228 (IQWE…FALW) and 237-257 (FVYF…IRGL). N-linked (GlcNAc...) asparagine glycosylation is present at asparagine 273. A run of 7 helical transmembrane segments spans residues 286-306 (AGTQ…ALGS), 321-341 (MCFI…SILG), 378-398 (VFAV…QVCM), 420-440 (SLGI…THSG), 454-474 (GYAL…GFGA), 499-519 (FCAP…YHPV), and 536-556 (WFLS…YLFF). Residues 557–600 (TNKHLTLKERVRKGLNLDGSFESPAKKNLVNNAEELKFIESSSQ) lie on the Cytoplasmic side of the membrane.

Belongs to the sodium:neurotransmitter symporter (SNF) family. As to expression, highly expressed in the head, the excretory canal, tail hypodermal cells, epidermis and vulval epithelial cells. Expressed in the excretory canal-associated neuron and in some non-amphidial sensory neurons in the head (at protein level).

It localises to the cell membrane. Its function is as follows. Betaine transporter dependent on Na(+) and Cl(-) ions that functions primarily in the epidermis to clear betaine from the extracellular space. Elicits current in response to betaine but not in response to GABA, L-carnitine, sarcosine, glycine or dimethylglycine. The polypeptide is Sodium- and chloride-dependent betaine transporter (Caenorhabditis elegans).